The sequence spans 141 residues: 3-hydroxyacyl-[acyl-carrier-protein] dehydratase FabZ (141 aa).

The active site involves H49.

This sequence belongs to the thioester dehydratase family. FabZ subfamily.

It is found in the cytoplasm. The enzyme catalyses a (3R)-hydroxyacyl-[ACP] = a (2E)-enoyl-[ACP] + H2O. In terms of biological role, involved in unsaturated fatty acids biosynthesis. Catalyzes the dehydration of short chain beta-hydroxyacyl-ACPs and long chain saturated and unsaturated beta-hydroxyacyl-ACPs. The polypeptide is 3-hydroxyacyl-[acyl-carrier-protein] dehydratase FabZ (fabZ2) (Enterococcus faecalis (strain ATCC 700802 / V583)).